The chain runs to 460 residues: Cysteine--tRNA ligase (460 aa).

Residue Cys-28 coordinates Zn(2+). Residues 30-40 (MTVYDYCHLGH) carry the 'HIGH' region motif. Zn(2+) contacts are provided by Cys-209, His-234, and Glu-238. Residues 266 to 270 (KMSKS) carry the 'KMSKS' region motif. An ATP-binding site is contributed by Lys-269.

This sequence belongs to the class-I aminoacyl-tRNA synthetase family. Monomer. The cofactor is Zn(2+).

It localises to the cytoplasm. It catalyses the reaction tRNA(Cys) + L-cysteine + ATP = L-cysteinyl-tRNA(Cys) + AMP + diphosphate. The polypeptide is Cysteine--tRNA ligase (Pseudomonas aeruginosa (strain LESB58)).